Reading from the N-terminus, the 758-residue chain is Putative transcriptional regulatory protein YJL206C (758 aa).

Positions 47–73 (CIACRKRKVRCSGNIPCRLCQTNSYEC) form a DNA-binding region, zn(2)-C6 fungal-type.

This sequence belongs to the ASG1 family.

It is found in the nucleus. The chain is Putative transcriptional regulatory protein YJL206C from Saccharomyces cerevisiae (strain ATCC 204508 / S288c) (Baker's yeast).